The chain runs to 139 residues: Ribosome-binding factor A (139 aa).

The segment at 120–139 (PENLLAVEDNTDEDDESFSE) is disordered. Over residues 128–139 (DNTDEDDESFSE) the composition is skewed to acidic residues.

Belongs to the RbfA family. Monomer. Binds 30S ribosomal subunits, but not 50S ribosomal subunits or 70S ribosomes.

The protein localises to the cytoplasm. In terms of biological role, one of several proteins that assist in the late maturation steps of the functional core of the 30S ribosomal subunit. Associates with free 30S ribosomal subunits (but not with 30S subunits that are part of 70S ribosomes or polysomes). Required for efficient processing of 16S rRNA. May interact with the 5'-terminal helix region of 16S rRNA. This Nostoc punctiforme (strain ATCC 29133 / PCC 73102) protein is Ribosome-binding factor A.